A 289-amino-acid chain; its full sequence is Movement protein (289 aa).

The protein belongs to the ilarvirus movement protein family.

The protein localises to the host cell junction. It localises to the host plasmodesma. Transports viral genome to neighboring plant cells directly through plasmosdesmata, without any budding. The movement protein allows efficient cell to cell propagation, by bypassing the host cell wall barrier. Acts by forming a tubular structure at the host plasmodesmata, enlarging it enough to allow free passage of virion capsids. This is Movement protein from Tobacco streak virus (strain WC) (TSV).